The sequence spans 95 residues: UPF0235 protein Ssed_1229 (95 aa).

This sequence belongs to the UPF0235 family.

In Shewanella sediminis (strain HAW-EB3), this protein is UPF0235 protein Ssed_1229.